The sequence spans 482 residues: Cilia- and flagella-associated protein 53 (482 aa).

Coiled coils occupy residues 9 to 40 (DARI…AVAE), 67 to 124 (ADLN…QALA), and 152 to 413 (IEER…AKDA). Residues 462–482 (VNQTLSSTDPPVWHGRRKFDW) form a disordered region.

Belongs to the CFAP53 family.

Its subcellular location is the cell projection. The protein localises to the cilium. It localises to the flagellum. May play a role in filopodium movement. In Chlamydomonas reinhardtii (Chlamydomonas smithii), this protein is Cilia- and flagella-associated protein 53.